The primary structure comprises 389 residues: Succinate--CoA ligase [ADP-forming] subunit beta (389 aa).

In terms of domain architecture, ATP-grasp spans 9 to 244 (KELLRQFNVP…IDEEDAAEIE (236 aa)). ATP contacts are provided by residues K46, 53–55 (GRG), E99, A102, and E107. Mg(2+)-binding residues include N199 and D213. Substrate is bound by residues N264 and 321 to 323 (GIM).

Belongs to the succinate/malate CoA ligase beta subunit family. Heterotetramer of two alpha and two beta subunits. Mg(2+) is required as a cofactor.

It catalyses the reaction succinate + ATP + CoA = succinyl-CoA + ADP + phosphate. It carries out the reaction GTP + succinate + CoA = succinyl-CoA + GDP + phosphate. The protein operates within carbohydrate metabolism; tricarboxylic acid cycle; succinate from succinyl-CoA (ligase route): step 1/1. Its function is as follows. Succinyl-CoA synthetase functions in the citric acid cycle (TCA), coupling the hydrolysis of succinyl-CoA to the synthesis of either ATP or GTP and thus represents the only step of substrate-level phosphorylation in the TCA. The beta subunit provides nucleotide specificity of the enzyme and binds the substrate succinate, while the binding sites for coenzyme A and phosphate are found in the alpha subunit. The protein is Succinate--CoA ligase [ADP-forming] subunit beta of Polynucleobacter asymbioticus (strain DSM 18221 / CIP 109841 / QLW-P1DMWA-1) (Polynucleobacter necessarius subsp. asymbioticus).